The following is a 125-amino-acid chain: Small ribosomal subunit protein uS12 (125 aa).

The segment at 1 to 26 (MPTINQLVRKSRKTVKAQSDSPALKN) is disordered. Position 89 is a 3-methylthioaspartic acid (Asp-89).

Belongs to the universal ribosomal protein uS12 family. As to quaternary structure, part of the 30S ribosomal subunit. Contacts proteins S8 and S17. May interact with IF1 in the 30S initiation complex.

Functionally, with S4 and S5 plays an important role in translational accuracy. Its function is as follows. Interacts with and stabilizes bases of the 16S rRNA that are involved in tRNA selection in the A site and with the mRNA backbone. Located at the interface of the 30S and 50S subunits, it traverses the body of the 30S subunit contacting proteins on the other side and probably holding the rRNA structure together. The combined cluster of proteins S8, S12 and S17 appears to hold together the shoulder and platform of the 30S subunit. The sequence is that of Small ribosomal subunit protein uS12 from Clostridium tetani (strain Massachusetts / E88).